Here is a 249-residue protein sequence, read N- to C-terminus: Transmembrane protein 150C (249 aa).

Residues 1 to 9 are Cytoplasmic-facing; that stretch reads MDGKKCSVW. Residues 10 to 30 form a helical membrane-spanning segment; sequence MFLPLVFTLFTSAGLWIVYFI. Residues 31–64 are Extracellular-facing; sequence AVEDDKILPLNSAERKPGVKHAPYISIAGDDPPA. The helical transmembrane segment at 65–85 threads the bilayer; it reads SCVFSQVMNMAAFLALVVAVL. Over 86-97 the chain is Cytoplasmic; the sequence is RFIQLKPKVLNP. The chain crosses the membrane as a helical span at residues 98–118; it reads WLNISGLVALCLASFGMTLLG. The Extracellular segment spans residues 119-130; that stretch reads NFQLTNDEEIHN. The helical transmembrane segment at 131–151 threads the bilayer; it reads VGTSLTFGFGTLTCWIQAALT. The Cytoplasmic portion of the chain corresponds to 152–168; it reads LKVNIKNEGRRVGIPRV. A helical membrane pass occupies residues 169–189; that stretch reads ILSASITLCVVLYFILMAQSI. Topologically, residues 190-192 are extracellular; it reads HMY. A helical transmembrane segment spans residues 193 to 213; that stretch reads AARVQWGLVMCFLSYFGTFAV. Over 214–249 the chain is Cytoplasmic; the sequence is EFRHYRYEIVCSEYQENFLSFSESLSEASEYQTDQV.

The protein belongs to the DRAM/TMEM150 family.

It localises to the cell membrane. It is found in the lysosome membrane. It carries out the reaction Ca(2+)(in) = Ca(2+)(out). The catalysed reaction is Na(+)(in) = Na(+)(out). It catalyses the reaction K(+)(in) = K(+)(out). The enzyme catalyses Mg(2+)(in) = Mg(2+)(out). In terms of biological role, nonselective cationic channel with high permeability to Ca(2+). Component of a mechanosensitive cation channel, confers mechanically activated (MA) currents with slow inactivation kinetics. May contribute to proprioception. This chain is Transmembrane protein 150C, found in Homo sapiens (Human).